The following is a 712-amino-acid chain: BTB/POZ domain-containing protein 18 (712 aa).

A BTB domain is found at 34–102; sequence CDVLLQAEGE…LYTSEMEVSQ (69 aa). 3 disordered regions span residues 157–176, 212–355, and 374–410; these read VTPS…PCPL, RACP…EGQV, and ETPL…QEMS. Residues 218 to 228 are compositionally biased toward polar residues; that stretch reads QEKNSSPSSHS. The span at 229 to 238 shows a compositional bias: basic and acidic residues; sequence QEPRENKNDT. Residues 277–288 show a composition bias toward low complexity; that stretch reads SKPSSILSGSSS. A compositionally biased stretch (basic and acidic residues) spans 303 to 313; that stretch reads VNKETPEDKPK. Residues 396-410 show a composition bias toward polar residues; sequence PSGTQPFSSNEQEMS. Residues S420, S671, and S672 each carry the phosphoserine modification. Disordered regions lie at residues 653–676 and 691–712; these read KAGK…EEEE and TTVP…DILT. Residues 702-712 are compositionally biased toward acidic residues; sequence SESETEVDILT.

It is found in the nucleus. Specifically required during spermatogenesis to promote expression of piRNA precursors. The piRNA metabolic process mediates the repression of transposable elements during meiosis by forming complexes composed of piRNAs and Piwi proteins and governs the methylation and subsequent repression of transposons, which is essential for the germline integrity. Acts by facilitating transcription elongation at piRNA loci during pachytene. This Homo sapiens (Human) protein is BTB/POZ domain-containing protein 18.